Here is a 737-residue protein sequence, read N- to C-terminus: Alpha-adducin (737 aa).

Met-1 bears the N-acetylmethionine mark. Residues 1-21 (MNGDSRAAVVTSPPPTTAPHK) are disordered. At Ser-12 the chain carries Phosphoserine. At Ser-59 the chain carries Phosphoserine; by PKA. At Ser-64 the chain carries Phosphoserine. Position 331 is a phosphothreonine (Thr-331). Ser-334, Ser-353, Ser-355, Ser-358, and Ser-366 each carry phosphoserine. Ser-408 is modified (phosphoserine; by PKA). Positions 419–430 (YSFTSDGDSGTC) are enriched in polar residues. Disordered regions lie at residues 419-490 (YSFT…NLFV) and 576-737 (RREV…KSES). Ser-427 bears the Phosphoserine mark. Residue Thr-429 is modified to Phosphothreonine. Phosphoserine is present on Ser-431. Residue Ser-436 is modified to Phosphoserine; by PKA. Thr-445 is modified (phosphothreonine; by ROCK2). Residues Ser-464 and Ser-465 each carry the phosphoserine modification. A Phosphothreonine; by ROCK2 modification is found at Thr-480. Position 481 is a phosphoserine; by PKA (Ser-481). The segment covering 576-601 (RREVERKQKGSEENLDEAREQKEKSP) has biased composition (basic and acidic residues). Residues Ser-586, Ser-600, and Ser-613 each carry the phosphoserine modification. Over residues 602–614 (PDQPAVPYPPPST) the composition is skewed to pro residues. Thr-614 carries the post-translational modification Phosphothreonine. Residues Ser-678, Ser-707, Ser-710, and Ser-714 each carry the phosphoserine modification. Residues 687–714 (PVAEEAAPSAAEEGAAADPGSDGSPGKS) show a composition bias toward low complexity. Basic residues predominate over residues 715–737 (PSKKKKKFRTPSFLKKSKKKSES). Phosphoserine; by PKC is present on Ser-716. The tract at residues 717 to 734 (KKKKKFRTPSFLKKSKKK) is interaction with calmodulin. Ser-726 is modified (phosphoserine; by PKA and PKC).

Belongs to the aldolase class II family. Adducin subfamily. Heterodimer of an alpha and a beta subunit or an alpha and a gamma subunit.

It is found in the cytoplasm. It localises to the cytoskeleton. The protein resides in the cell membrane. Membrane-cytoskeleton-associated protein that promotes the assembly of the spectrin-actin network. Binds to calmodulin. The chain is Alpha-adducin (ADD1) from Pongo abelii (Sumatran orangutan).